The sequence spans 150 residues: Large ribosomal subunit protein uL11 (150 aa).

Belongs to the universal ribosomal protein uL11 family. In terms of assembly, part of the ribosomal stalk of the 50S ribosomal subunit. Interacts with L10 and the large rRNA to form the base of the stalk. L10 forms an elongated spine to which L12 dimers bind in a sequential fashion forming a multimeric L10(L12)X complex. One or more lysine residues are methylated.

In terms of biological role, forms part of the ribosomal stalk which helps the ribosome interact with GTP-bound translation factors. In Azobacteroides pseudotrichonymphae genomovar. CFP2, this protein is Large ribosomal subunit protein uL11.